A 148-amino-acid chain; its full sequence is Transcriptional repressor NrdR (148 aa).

The interval 1–22 (MKCPYCSAPDSKVVNSRPSDDG) is disordered. The segment at 3-34 (CPYCSAPDSKVVNSRPSDDGASIRRRRECLNC) is a zinc-finger region. In terms of domain architecture, ATP-cone spans 49-136 (LMVVKRSGPR…VYRDFDSLER (88 aa)).

This sequence belongs to the NrdR family. It depends on Zn(2+) as a cofactor.

Functionally, negatively regulates transcription of bacterial ribonucleotide reductase nrd genes and operons by binding to NrdR-boxes. The polypeptide is Transcriptional repressor NrdR (Deinococcus deserti (strain DSM 17065 / CIP 109153 / LMG 22923 / VCD115)).